A 43-amino-acid chain; its full sequence is Protein PsbN (43 aa).

A helical transmembrane segment spans residues 5-27 (TLVTIFISGSLVSFTGYALYTAF).

The protein belongs to the PsbN family.

It is found in the plastid. It localises to the chloroplast thylakoid membrane. Its function is as follows. May play a role in photosystem I and II biogenesis. The polypeptide is Protein PsbN (Piper cenocladum (Ant piper)).